The primary structure comprises 188 residues: MSTRAPVELDFLGLRAAAADADDRHAKSGGSSASSSSSIRGMETSAIARIGPHLLRRVIAAAGPPPPPSTAPVPEEMPGAAAAAAPMTLFYNGSVAVFDVSHDKAEAIMRMATEATKAKGLARGNAIVGNFAKEPLTRTKSLQRFLSKRKERLTSLGPYQVGGPAAVGATTSTTTKSFLAKEEEHTAS.

A disordered region spans residues 20–41; sequence DADDRHAKSGGSSASSSSSIRG. Residues 28–38 are compositionally biased toward low complexity; sequence SGGSSASSSSS. Residues 80–114 enclose the Tify domain; it reads AAAAAAPMTLFYNGSVAVFDVSHDKAEAIMRMATE. The short motif at 135–160 is the Jas element; the sequence is PLTRTKSLQRFLSKRKERLTSLGPYQ. The disordered stretch occupies residues 156–188; that stretch reads LGPYQVGGPAAVGATTSTTTKSFLAKEEEHTAS. Basic and acidic residues predominate over residues 179–188; sequence LAKEEEHTAS.

Belongs to the TIFY/JAZ family. Interacts with COI1A and COI2 in a coronatine-dependent manner. Coronatine is an analog of jasmonoyl isoleucine (JA-Ile). Ubiquitinated. Targeted for degradation by the SCF(COI1) E3 ubiquitin ligase-proteasome pathway during jasmonate signaling.

Its function is as follows. Repressor of jasmonate responses. This Oryza sativa subsp. japonica (Rice) protein is Protein TIFY 9.